The chain runs to 245 residues: 8-amino-3,8-dideoxy-manno-octulosonate cytidylyltransferase (245 aa).

This sequence belongs to the KdsB family.

The protein resides in the cytoplasm. It catalyses the reaction 8-amino-3,8-dideoxy-alpha-D-manno-octulosonate + CTP = CMP-8-amino-3,8-dideoxy-alpha-D-manno-oct-2-ulosonate + diphosphate. The protein operates within bacterial outer membrane biogenesis; lipopolysaccharide biosynthesis. Activates KDO8N (a required 8-carbon sugar) for incorporation into bacterial lipopolysaccharide in the Shewanella genus. In Shewanella oneidensis (strain ATCC 700550 / JCM 31522 / CIP 106686 / LMG 19005 / NCIMB 14063 / MR-1), this protein is 8-amino-3,8-dideoxy-manno-octulosonate cytidylyltransferase.